Reading from the N-terminus, the 300-residue chain is Putative S-adenosyl-L-methionine-dependent methyltransferase MMAR_1058 (300 aa).

S-adenosyl-L-methionine contacts are provided by residues D127 and D156–L157.

This sequence belongs to the UPF0677 family.

Functionally, exhibits S-adenosyl-L-methionine-dependent methyltransferase activity. The chain is Putative S-adenosyl-L-methionine-dependent methyltransferase MMAR_1058 from Mycobacterium marinum (strain ATCC BAA-535 / M).